The sequence spans 249 residues: Tryptophan synthase alpha chain (249 aa).

Active-site proton acceptor residues include glutamate 43 and aspartate 54.

The protein belongs to the TrpA family. In terms of assembly, tetramer of two alpha and two beta chains.

The catalysed reaction is (1S,2R)-1-C-(indol-3-yl)glycerol 3-phosphate + L-serine = D-glyceraldehyde 3-phosphate + L-tryptophan + H2O. The protein operates within amino-acid biosynthesis; L-tryptophan biosynthesis; L-tryptophan from chorismate: step 5/5. Its function is as follows. The alpha subunit is responsible for the aldol cleavage of indoleglycerol phosphate to indole and glyceraldehyde 3-phosphate. This Campylobacter jejuni subsp. doylei (strain ATCC BAA-1458 / RM4099 / 269.97) protein is Tryptophan synthase alpha chain.